A 365-amino-acid polypeptide reads, in one-letter code: Oligosaccharides import ATP-binding protein MsmX (365 aa).

An ABC transporter domain is found at 4-235; sequence LRMEHIYKFY…PENVFVGGFI (232 aa). ATP is bound at residue 37-44; that stretch reads GPSGCGKS.

It belongs to the ABC transporter superfamily. In terms of assembly, the complex involved in maltodextrin import is composed of two ATP-binding proteins (MsmX), two transmembrane proteins (MdxF and MdxG) and a solute-binding protein (MdxE). The complex involved in arabinooligosaccharides uptake is composed of two ATP-binding proteins (MsmX), two transmembrane proteins (AraP and AraQ) and a solute-binding protein (AraN). The complex involved in galactooligosaccharides uptake is composed of two ATP-binding proteins (MsmX), two transmembrane proteins (GanP and GanQ) and a solute-binding protein (GanS). The complex involved in melibiose, raffinose and stachyose import is composed of two ATP-binding proteins (MsmX), two transmembrane proteins (MelC and MelD) and a solute-binding protein (MelE). The complex involved in polygalacturonan and rhamnogalacturonan type I uptake is probably composed of two ATP-binding proteins (MsmX), two transmembrane proteins (YtcP and YteP) and a solute-binding protein (YtcQ).

The protein localises to the cell membrane. In terms of biological role, required to energize different ABC-type saccharide transporters. Part of the MdxEFG-MsmX ABC transporter complex involved in maltodextrin import, of the AraNPQ-MsmX complex involved in arabinooligosaccharides import, of the GanPQS-MsmX complex involved in galactooligosaccharides import, and of the MelEDC-MsmX complex involved in melibiose, raffinose and stachyose import. Is probably also part of the ABC transporter complex YtcQP-YteP-MsmX involved in polygalacturonan and rhamnogalacturonan type I import during pectin degradation. Responsible for energy coupling to the transport system. The protein is Oligosaccharides import ATP-binding protein MsmX (msmX) of Bacillus subtilis (strain 168).